A 443-amino-acid polypeptide reads, in one-letter code: Amino-acid acetyltransferase (443 aa).

One can recognise an N-acetyltransferase domain in the interval 296–434 (EQIRRATIND…KKLMYNYQRR (139 aa)).

The protein belongs to the acetyltransferase family. ArgA subfamily. Homohexamer.

The protein resides in the cytoplasm. The catalysed reaction is L-glutamate + acetyl-CoA = N-acetyl-L-glutamate + CoA + H(+). The protein operates within amino-acid biosynthesis; L-arginine biosynthesis; N(2)-acetyl-L-ornithine from L-glutamate: step 1/4. This is Amino-acid acetyltransferase from Escherichia fergusonii (strain ATCC 35469 / DSM 13698 / CCUG 18766 / IAM 14443 / JCM 21226 / LMG 7866 / NBRC 102419 / NCTC 12128 / CDC 0568-73).